Here is a 932-residue protein sequence, read N- to C-terminus: Protocadherin gamma-A6 (932 aa).

An N-terminal signal peptide occupies residues 1-29 (MAPPQRHPQRSEQVLLLTLLGTLWGAAAA). Cadherin domains are found at residues 30–133 (QIRY…TPRF), 134–242 (LKEE…TPVF), 243–347 (TQPV…VPEV), 348–452 (VVTS…PPTF), 453–562 (PHSS…APEI), and 570–682 (DGST…EPSA). Residues 30-692 (QIRYSIPEEL…KPNDSDLTLY (663 aa)) are Extracellular-facing. Asn81 carries an N-linked (GlcNAc...) asparagine glycan. 2 N-linked (GlcNAc...) asparagine glycosylation sites follow: Asn419 and Asn545. N-linked (GlcNAc...) asparagine glycosylation occurs at Asn685. Residues 693–713 (LVVAVAAVSCVFLAFVIVLLA) form a helical membrane-spanning segment. Residues 714-932 (LRLQRWHKSR…KKKSGKKEKK (219 aa)) lie on the Cytoplasmic side of the membrane. Disordered stretches follow at residues 803–841 (DPRQ…WPNN) and 902–932 (ATLT…KEKK). Residues 806–841 (QLQQAPPNTDWRFSQAQRPGTSGSQNGDDTGTWPNN) show a composition bias toward polar residues. The segment covering 922–932 (NKKKSGKKEKK) has biased composition (basic residues).

Its subcellular location is the cell membrane. Potential calcium-dependent cell-adhesion protein. May be involved in the establishment and maintenance of specific neuronal connections in the brain. In Pan troglodytes (Chimpanzee), this protein is Protocadherin gamma-A6 (PCDHGA6).